The sequence spans 625 residues: tRNA uridine 5-carboxymethylaminomethyl modification enzyme MnmG (625 aa).

Residues 9-14 (GGGHAG), Val121, and Ser177 contribute to the FAD site. 271 to 285 (GPRYCPSIEDKVNRF) contacts NAD(+). Gln368 contributes to the FAD binding site.

This sequence belongs to the MnmG family. In terms of assembly, homodimer. Heterotetramer of two MnmE and two MnmG subunits. Requires FAD as cofactor.

It is found in the cytoplasm. In terms of biological role, NAD-binding protein involved in the addition of a carboxymethylaminomethyl (cmnm) group at the wobble position (U34) of certain tRNAs, forming tRNA-cmnm(5)s(2)U34. The sequence is that of tRNA uridine 5-carboxymethylaminomethyl modification enzyme MnmG from Aliarcobacter butzleri (strain RM4018) (Arcobacter butzleri).